Reading from the N-terminus, the 362-residue chain is Adenosine deaminase (362 aa).

The Zn(2+) site is built by His19 and His21. Substrate is bound by residues His21, Asp23, and Gly181. His208 is a Zn(2+) binding site. The Proton donor role is filled by Glu211. Asp300 provides a ligand contact to Zn(2+).

Belongs to the metallo-dependent hydrolases superfamily. Adenosine and AMP deaminases family. Adenosine deaminase subfamily. Zn(2+) serves as cofactor.

It carries out the reaction adenosine + H2O + H(+) = inosine + NH4(+). It catalyses the reaction 2'-deoxyadenosine + H2O + H(+) = 2'-deoxyinosine + NH4(+). Its function is as follows. Catalyzes the hydrolytic deamination of adenosine and 2-deoxyadenosine. This is Adenosine deaminase from Mycobacterium marinum (strain ATCC BAA-535 / M).